The chain runs to 154 residues: Protein X (154 aa).

Residues 68-117 (PCALRFTSARRMETTVNAHQILPKVLHKRTLGLSAMSTTDLEAYFKDCLF) form a mitochondrial targeting sequence region.

This sequence belongs to the orthohepadnavirus protein X family. In terms of assembly, may form homodimer. May interact with host CEBPA, CFLAR, CREB1, DDB1, E4F1, HBXIP, HSPD1/HSP60, NFKBIA, POLR2E and SMAD4. Interacts with host SMC5-SMC6 complex and induces its degradation. Interacts with host TRPC4AP; leading to prevent ubiquitination of TRPC4AP. Interacts with host PLSCR1; this interaction promotes ubiquitination and degradation of HBx and impairs HBx-mediated cell proliferation. Post-translationally, a fraction may be phosphorylated in insect cells and HepG2 cells, a human hepatoblastoma cell line. Phosphorylated in vitro by host protein kinase C or mitogen-activated protein kinase. N-acetylated in insect cells.

It localises to the host cytoplasm. The protein localises to the host nucleus. Its subcellular location is the host mitochondrion. Functionally, multifunctional protein that plays a role in silencing host antiviral defenses and promoting viral transcription. Does not seem to be essential for HBV infection. May be directly involved in development of cirrhosis and liver cancer (hepatocellular carcinoma). Most of cytosolic activities involve modulation of cytosolic calcium. The effect on apoptosis is controversial depending on the cell types in which the studies have been conducted. May induce apoptosis by localizing in mitochondria and causing loss of mitochondrial membrane potential. May also modulate apoptosis by binding host CFLAR, a key regulator of the death-inducing signaling complex (DISC). Promotes viral transcription by using the host E3 ubiquitin ligase DDB1 to target the SMC5-SMC6 complex to proteasomal degradation. This host complex would otherwise bind to viral episomal DNA, and prevents its transcription. Moderately stimulates transcription of many different viral and cellular transcription elements. Promoters and enhancers stimulated by HBx contain DNA binding sites for NF-kappa-B, AP-1, AP-2, c-EBP, ATF/CREB, or the calcium-activated factor NF-AT. The polypeptide is Protein X (Hepatitis B virus genotype E subtype ayw4 (isolate Kou) (HBV-E)).